Consider the following 369-residue polypeptide: C-C chemokine receptor type 9 (369 aa).

The Extracellular portion of the chain corresponds to 1-48 (MMPTELTSLIPGMFDDFSYDSTASTDDYMNLNFSSFFCKKNNVRQFAS). N-linked (GlcNAc...) asparagine glycosylation occurs at N32. Cystine bridges form between C38–C289 and C119–C198. A helical transmembrane segment spans residues 49-74 (HFLPPLYWLVFIVGTLGNSLVILVYW). Residues 75 to 85 (YCTRVKTMTDM) lie on the Cytoplasmic side of the membrane. A helical membrane pass occupies residues 86–109 (FLLNLAIADLLFLATLPFWAIAAA). Residues 110–120 (GQWMFQTFMCK) are Extracellular-facing. A helical transmembrane segment spans residues 121-150 (VVNSMYKMNFYSCVLLIMCISVDRYIAIVQ). The Cytoplasmic portion of the chain corresponds to 151–159 (AMKAQVWRQ). Residues 160 to 185 (KRLLYSKMVCITIWVMAAVLCTPEIL) traverse the membrane as a helical segment. The Extracellular portion of the chain corresponds to 186-208 (YSQVSGESGIATCTMVYPKDKNA). A helical transmembrane segment spans residues 209-243 (KLKSAVLILKVTLGFFLPFMVMAFCYTIIIHTLVQ). Over 244–248 (AKKSS) the chain is Cytoplasmic. Residues 249–283 (KHKALKVTITVLTVFIMSQFPYNSILVVQAVDAYA) form a helical membrane-spanning segment. The Extracellular portion of the chain corresponds to 284 to 290 (MFISNCT). Residues 291-321 (ISTNIDICFQVTQTIAFFHSCLNPVLYVFVG) traverse the membrane as a helical segment. Residues 322–369 (ERFRRDLVKTLKNLGCISQAQWVSFTRREGSLKLSSMLLETTSGALSL) lie on the Cytoplasmic side of the membrane.

Belongs to the G-protein coupled receptor 1 family. In terms of tissue distribution, highly expressed in the thymus and low in lymph nodes and spleen.

The protein resides in the cell membrane. Functionally, receptor for chemokine SCYA25/TECK. Subsequently transduces a signal by increasing the intracellular calcium ions level. This chain is C-C chemokine receptor type 9 (Ccr9), found in Mus musculus (Mouse).